The chain runs to 338 residues: Structural protein VP9 (338 aa).

The protein resides in the virion. Plays an important role in virus transmission by the insect vector. May participate in the virus stability by binding clamp proteins and surrounding the pentameric turrets present in the virion. The protein is Structural protein VP9 of Rice ragged stunt virus (isolate Thailand) (RRSV).